The chain runs to 232 residues: Glutathione S-transferase E14 (232 aa).

The 82-residue stretch at 4–85 (PKPILYYDER…HLAEKFDEGG (82 aa)) folds into the GST N-terminal domain. Positions 91–218 (EHAERMKVLN…RQTMESVGSF (128 aa)) constitute a GST C-terminal domain.

It belongs to the GST superfamily. Epsilon family. In terms of tissue distribution, expressed in the adult ovary (at protein level).

It catalyses the reaction RX + glutathione = an S-substituted glutathione + a halide anion + H(+). In terms of biological role, conjugation of reduced glutathione to a wide number of exogenous and endogenous hydrophobic electrophiles. Essential for ecdysteroid biosynthesis. May be involved in detoxification. The polypeptide is Glutathione S-transferase E14 (Drosophila melanogaster (Fruit fly)).